Reading from the N-terminus, the 86-residue chain is Beta-toxin Tz1 (86 aa).

The first 20 residues, 1–20 (MTRFVLFICCFFLIGMVVEC), serve as a signal peptide directing secretion. Residues 21 to 83 (KDGYLVGNDG…TWDRATNRCG (63 aa)) enclose the LCN-type CS-alpha/beta domain. Intrachain disulfides connect Cys31-Cys82, Cys35-Cys57, Cys43-Cys63, and Cys47-Cys65. Arginine amide is present on Arg84.

Belongs to the long (4 C-C) scorpion toxin superfamily. Sodium channel inhibitor family. Beta subfamily. Expressed by the venom gland.

Its subcellular location is the secreted. Functionally, beta toxins bind voltage-independently at site-4 of sodium channels (Nav) and shift the voltage of activation toward more negative potentials thereby affecting sodium channel activation and promoting spontaneous and repetitive firing. Strongly affects skeletal muscle channels Nav1.4/SCN4A, poorly affects the neuronal channels Nav1.6/SCN8A and Nav1.2/SCN2A. Induces spastic paralysis of rear limbs, increased salivation, apnea, tachycardia and increased perspiration. This Tityus zulianus (Venezuelan scorpion) protein is Beta-toxin Tz1.